We begin with the raw amino-acid sequence, 122 residues long: Large ribosomal subunit protein bL12 (122 aa).

This sequence belongs to the bacterial ribosomal protein bL12 family. Homodimer. Part of the ribosomal stalk of the 50S ribosomal subunit. Forms a multimeric L10(L12)X complex, where L10 forms an elongated spine to which 2 to 4 L12 dimers bind in a sequential fashion. Binds GTP-bound translation factors.

Forms part of the ribosomal stalk which helps the ribosome interact with GTP-bound translation factors. Is thus essential for accurate translation. In Xylella fastidiosa (strain 9a5c), this protein is Large ribosomal subunit protein bL12.